A 193-amino-acid chain; its full sequence is Probable GTP-binding protein EngB (193 aa).

The region spanning 22–193 (QLPEFALAGR…EAWGALQKWM (172 aa)) is the EngB-type G domain. GTP contacts are provided by residues 30–37 (GRSNVGKS), 57–61 (GKTQT), 75–78 (DVPG), 142–145 (TKAD), and 174–176 (FSA). Residues Ser37 and Thr59 each contribute to the Mg(2+) site.

Belongs to the TRAFAC class TrmE-Era-EngA-EngB-Septin-like GTPase superfamily. EngB GTPase family. Requires Mg(2+) as cofactor.

Its function is as follows. Necessary for normal cell division and for the maintenance of normal septation. This chain is Probable GTP-binding protein EngB, found in Anoxybacillus flavithermus (strain DSM 21510 / WK1).